A 111-amino-acid polypeptide reads, in one-letter code: Large ribosomal subunit protein bL20c (111 aa).

This sequence belongs to the bacterial ribosomal protein bL20 family.

It localises to the plastid. The protein resides in the chloroplast. Binds directly to 23S ribosomal RNA and is necessary for the in vitro assembly process of the 50S ribosomal subunit. It is not involved in the protein synthesizing functions of that subunit. The polypeptide is Large ribosomal subunit protein bL20c (Ostreococcus tauri).